The primary structure comprises 481 residues: Velvet complex subunit B (481 aa).

2 disordered regions span residues 1-157 (MNSA…YSKI) and 241-339 (GTGA…NGYG). 3 stretches are compositionally biased toward pro residues: residues 36 to 45 (HPPPPLPPPS), 53 to 62 (PPLPPPPSAP), and 96 to 112 (PYAPAPYQQPQPSQYPR). The 305-residue stretch at 160–464 (GSGWKYSLDV…ANQGIKIPIR (305 aa)) folds into the Velvet domain. 2 stretches are compositionally biased toward low complexity: residues 241–255 (GTGAMASSSTYTYSS) and 293–325 (QQSYGQAPSYPPSSSYGPPQQYYPRHSGYSAEP).

This sequence belongs to the velvet family. VelB subfamily. As to quaternary structure, component of the heterotrimeric velvet complex composed of laeA, veA and velB; VeA acting as a bridging protein between laeA and velB. Forms a heterodimeric complex with vosA; the formation of the velB-vosA complex is light-dependent.

It is found in the nucleus. The protein localises to the cytoplasm. In terms of biological role, component of the velvet transcription factor complex that controls sexual/asexual developmental ratio in response to light, promoting sexual development in the darkness while stimulating asexual sporulation under illumination. The velvet complex acts as a global regulator for secondary metabolite gene expression. Component of the velB-VosA heterodimeric complex that plays a dual role in activating genes associated with spore maturation and repressing certain development-associated genes. The velB-VosA complex binds DNA through the DNA-binding domain of vosA that recognizes an 11-nucleotide consensus sequence 5'-CTGGCCGCGGC-3' consisting of two motifs in the promoters of key developmental regulatory genes. Controls the biosynthetic gene cluster for beauvericin, a depsipeptide mycotoxin that functions as a virulence determinant. Also regulates chromatin structure and transcription of siderophore biosynthetic genes and is required for infection of tomato plants. The protein is Velvet complex subunit B of Fusarium oxysporum f. sp. lycopersici (strain 4287 / CBS 123668 / FGSC 9935 / NRRL 34936) (Fusarium vascular wilt of tomato).